The sequence spans 349 residues: Palmitoyltransferase PFA5 (349 aa).

2 helical membrane-spanning segments follow: residues 19-39 and 57-77; these read LIPF…CHQF and LIIV…LMLV. The DHHC domain maps to 126–176; it reads IWCSNCQSLKMSRTHHSTKVGYCVPRFDHYCVWIGTVLGRLNYKLFVQFTF. Residue Cys-156 is the S-palmitoyl cysteine intermediate of the active site. Helical transmembrane passes span 170–190 and 204–224; these read LFVQ…ISIA and VYAV…LFLT.

The protein belongs to the DHHC palmitoyltransferase family. PFA5 subfamily.

Its subcellular location is the membrane. The enzyme catalyses L-cysteinyl-[protein] + hexadecanoyl-CoA = S-hexadecanoyl-L-cysteinyl-[protein] + CoA. This is Palmitoyltransferase PFA5 (PFA5) from Kluyveromyces lactis (strain ATCC 8585 / CBS 2359 / DSM 70799 / NBRC 1267 / NRRL Y-1140 / WM37) (Yeast).